The sequence spans 97 residues: Protein RnfH (97 aa).

It belongs to the UPF0125 (RnfH) family.

In Paramagnetospirillum magneticum (strain ATCC 700264 / AMB-1) (Magnetospirillum magneticum), this protein is Protein RnfH.